Here is a 217-residue protein sequence, read N- to C-terminus: Large ribosomal subunit protein uL3 (217 aa).

Gln154 bears the N5-methylglutamine mark.

The protein belongs to the universal ribosomal protein uL3 family. In terms of assembly, part of the 50S ribosomal subunit. Forms a cluster with proteins L14 and L19. Post-translationally, methylated by PrmB.

One of the primary rRNA binding proteins, it binds directly near the 3'-end of the 23S rRNA, where it nucleates assembly of the 50S subunit. This chain is Large ribosomal subunit protein uL3, found in Burkholderia ambifaria (strain ATCC BAA-244 / DSM 16087 / CCUG 44356 / LMG 19182 / AMMD) (Burkholderia cepacia (strain AMMD)).